Here is a 628-residue protein sequence, read N- to C-terminus: Chaperone protein DnaK (628 aa).

T197 bears the Phosphothreonine; by autocatalysis mark. Positions 597 to 628 (EQMYKGEQGAQGGAADTSKKKSDDDVIDAEIE) are disordered.

This sequence belongs to the heat shock protein 70 family.

Acts as a chaperone. This Sulfurimonas denitrificans (strain ATCC 33889 / DSM 1251) (Thiomicrospira denitrificans (strain ATCC 33889 / DSM 1251)) protein is Chaperone protein DnaK.